The sequence spans 179 residues: Replication restart protein DnaT (179 aa).

Residues 1-83 (MSSRILTSHF…FEEPAAAPVA (83 aa)) are required for trimerization and to bind PriB. Positions 84-179 (VPMGKFAMYA…DSHIPRGFRG (96 aa)) are binds ssDNA. The segment at 151–179 (SRASNGGQPKRDVNSVSEPDSHIPRGFRG) is disordered. A compositionally biased stretch (basic and acidic residues) spans 159-173 (PKRDVNSVSEPDSHI).

Belongs to the DnaT family. In terms of assembly, homotrimer. Interacts with PriB. Interacts with PriC. Component of the replication restart primosome. Primosome assembly occurs via a 'hand-off' mechanism. PriA binds to replication forks, subsequently PriB then DnaT bind; DnaT then displaces ssDNA to generate the helicase loading substrate.

Its function is as follows. Involved in the restart of stalled replication forks, which reloads the replicative helicase on sites other than the origin of replication. Can function in multiple replication restart pathways. Displaces ssDNA from a PriB-ssDNA complex. Probably forms a spiral filament on ssDNA. In terms of biological role, binds single-stranded (ss)DNA. The minimal binding site is about 26 +/- 2 nucleotides (nt) per trimer. Two DNA-protein complexes are seen with 55 nt-long ssDNA. This chain is Replication restart protein DnaT, found in Klebsiella pneumoniae subsp. pneumoniae (strain ATCC 700721 / MGH 78578).